The following is a 612-amino-acid chain: Beta-mannosyltransferase 5 (612 aa).

At 1–12 the chain is on the cytoplasmic side; the sequence is MVQKQYRFAPKS. The helical transmembrane segment at 13–33 threads the bilayer; that stretch reads IFTFVFLCFVAIVVIISTSSL. Residues 34–612 lie on the Extracellular side of the membrane; it reads VQVEESLDPI…YRAHLKRWQN (579 aa). Residues Asn-224, Asn-230, and Asn-480 are each glycosylated (N-linked (GlcNAc...) asparagine).

It belongs to the BMT family.

The protein localises to the membrane. Functionally, beta-mannosyltransferase involved in cell wall biosynthesis. Required for beta-1,2-mannose transfer on phospholipomannan. The chain is Beta-mannosyltransferase 5 (BMT5) from Candida albicans (strain SC5314 / ATCC MYA-2876) (Yeast).